A 245-amino-acid polypeptide reads, in one-letter code: E3 ubiquitin-protein ligase RNF138 (245 aa).

An N-acetylalanine modification is found at Ala2. An RING-type zinc finger spans residues 18-58; sequence CPVCQEVLKTPVRTTACQHVFCRKCFLTAMRESGAHCPLCR. Zn(2+) is bound by residues Cys86, Cys89, His101, and Cys105. The C2HC RNF-type zinc-finger motif lies at 86 to 105; the sequence is CRCCAKQIKFYRMRHHYKSC. Residues 125–154 form a disordered region; it reads QDSVGNSNRSETSTSDNTETYQENTSSSGH. Thr142 carries the phosphothreonine modification. 2 consecutive C2H2-type zinc fingers follow at residues 157-180 and 187-215; these read FKCP…NSNH and VTCP…NQRH. A UIM domain is found at 225-243; that stretch reads LQLDEETQYQTAVEESFQV.

In terms of assembly, interacts with NLK. Interacts with XRCC5/Ku80. Interacts with RBBP8/CtIP. Auto-ubiquitinated.

Its subcellular location is the chromosome. It carries out the reaction S-ubiquitinyl-[E2 ubiquitin-conjugating enzyme]-L-cysteine + [acceptor protein]-L-lysine = [E2 ubiquitin-conjugating enzyme]-L-cysteine + N(6)-ubiquitinyl-[acceptor protein]-L-lysine.. Its pathway is protein modification; protein ubiquitination. Functionally, E3 ubiquitin-protein ligase involved in DNA damage response by promoting DNA resection and homologous recombination. Recruited to sites of double-strand breaks following DNA damage and specifically promotes double-strand break repair via homologous recombination. Two different, non-exclusive, mechanisms have been proposed. According to a report, regulates the choice of double-strand break repair by favoring homologous recombination over non-homologous end joining (NHEJ): acts by mediating ubiquitination of XRCC5/Ku80, leading to remove the Ku complex from DNA breaks, thereby promoting homologous recombination. According to another report, cooperates with UBE2Ds E2 ubiquitin ligases (UBE2D1, UBE2D2, UBE2D3 or UBE2D4) to promote homologous recombination by mediating ubiquitination of RBBP8/CtIP. Together with NLK, involved in the ubiquitination and degradation of TCF/LEF. Also exhibits auto-ubiquitination activity in combination with UBE2K. May act as a negative regulator in the Wnt/beta-catenin-mediated signaling pathway. This is E3 ubiquitin-protein ligase RNF138 from Homo sapiens (Human).